The sequence spans 271 residues: Tryptophan synthase alpha chain (271 aa).

Active-site proton acceptor residues include E49 and D60.

This sequence belongs to the TrpA family. Tetramer of two alpha and two beta chains.

It carries out the reaction (1S,2R)-1-C-(indol-3-yl)glycerol 3-phosphate + L-serine = D-glyceraldehyde 3-phosphate + L-tryptophan + H2O. The protein operates within amino-acid biosynthesis; L-tryptophan biosynthesis; L-tryptophan from chorismate: step 5/5. In terms of biological role, the alpha subunit is responsible for the aldol cleavage of indoleglycerol phosphate to indole and glyceraldehyde 3-phosphate. The polypeptide is Tryptophan synthase alpha chain (Burkholderia thailandensis (strain ATCC 700388 / DSM 13276 / CCUG 48851 / CIP 106301 / E264)).